A 364-amino-acid polypeptide reads, in one-letter code: Phosphoserine aminotransferase (364 aa).

Arg-40 contacts L-glutamate. Pyridoxal 5'-phosphate contacts are provided by residues 74-75 (GT), Trp-100, Thr-149, Asp-170, and Gln-193. The residue at position 194 (Lys-194) is an N6-(pyridoxal phosphate)lysine. 235–236 (NT) lines the pyridoxal 5'-phosphate pocket.

Belongs to the class-V pyridoxal-phosphate-dependent aminotransferase family. SerC subfamily. In terms of assembly, homodimer. The cofactor is pyridoxal 5'-phosphate. Expressed in ovary and head.

The enzyme catalyses O-phospho-L-serine + 2-oxoglutarate = 3-phosphooxypyruvate + L-glutamate. It carries out the reaction 4-(phosphooxy)-L-threonine + 2-oxoglutarate = (R)-3-hydroxy-2-oxo-4-phosphooxybutanoate + L-glutamate. The protein operates within amino-acid biosynthesis; L-serine biosynthesis; L-serine from 3-phospho-D-glycerate: step 2/3. It participates in cofactor biosynthesis; pyridoxine 5'-phosphate biosynthesis; pyridoxine 5'-phosphate from D-erythrose 4-phosphate: step 3/5. In terms of biological role, catalyzes the reversible conversion of 3-phosphohydroxypyruvate to phosphoserine and of 3-hydroxy-2-oxo-4-phosphonooxybutanoate to phosphohydroxythreonine. The polypeptide is Phosphoserine aminotransferase (Drosophila melanogaster (Fruit fly)).